Reading from the N-terminus, the 135-residue chain is MRIIQTTGKRKTAIARAVIREGKGRVRINGKPVELVEPEIARFTILEPLILAGEEIWNSVDIDVKVQGGGFMGQAEAARIAIARALVEWTGDMNLKEKFIKYDRTMLVGDPRRTEPHKPNRSTKGPRAKRQKSYR.

Over residues 108 to 118 (VGDPRRTEPHK) the composition is skewed to basic and acidic residues. The tract at residues 108–135 (VGDPRRTEPHKPNRSTKGPRAKRQKSYR) is disordered. Positions 119 to 135 (PNRSTKGPRAKRQKSYR) are enriched in basic residues.

It belongs to the universal ribosomal protein uS9 family.

The chain is Small ribosomal subunit protein uS9 (rps9) from Pyrococcus abyssi (strain GE5 / Orsay).